We begin with the raw amino-acid sequence, 112 residues long: Class I hydrophobin 17 (112 aa).

An N-terminal signal peptide occupies residues 1–19 (MYSQSMVLLAAAFASFVAA). Cystine bridges form between C30-C90, C37-C84, C38-C74, and C91-C104. An N-linked (GlcNAc...) asparagine glycan is attached at N108.

This sequence belongs to the fungal hydrophobin family. Self-assembles to form functional amyloid fibrils called rodlets. Self-assembly into fibrillar rodlets occurs spontaneously at hydrophobic:hydrophilic interfaces and the rodlets further associate laterally to form amphipathic monolayers.

It is found in the secreted. It localises to the cell wall. In terms of biological role, aerial growth, conidiation, and dispersal of filamentous fungi in the environment rely upon a capability of their secreting small amphipathic proteins called hydrophobins (HPBs) with low sequence identity. Class I can self-assemble into an outermost layer of rodlet bundles on aerial cell surfaces, conferring cellular hydrophobicity that supports fungal growth, development and dispersal; whereas Class II form highly ordered films at water-air interfaces through intermolecular interactions but contribute nothing to the rodlet structure. Hydph17 is a class I hydrophobin involved in mycelial growth. The protein is Class I hydrophobin 17 of Pleurotus ostreatus (strain PC15) (Oyster mushroom).